Reading from the N-terminus, the 1146-residue chain is Myosin heavy chain kinase A (1146 aa).

Residues 1–25 (MFNIKKRKESITGIPPINVNSPQSV) form a disordered region. The stretch at 100–120 (EQMEDQLEKTMKVVRNHTDSL) forms a coiled coil. Residues 158 to 191 (IQEKKSTSSPLVKGGISGGGGSGGDDSFDGANIS) are disordered. A compositionally biased stretch (gly residues) spans 172-181 (GISGGGGSGG). Coiled-coil stretches lie at residues 187-241 (GANI…KRIE) and 297-502 (SKIE…ASIS). Positions 500–551 (SISPISSVPKSPITTKRSSIILNSPPMTSQQSSPKIQDLLSSSGSSSVSGIN) are pseudosubstrate/autoinhibitory domain. The segment covering 521-534 (LNSPPMTSQQSSPK) has biased composition (polar residues). The interval 521 to 540 (LNSPPMTSQQSSPKIQDLLS) is disordered. The tract at residues 552 to 852 (ISSETGEMGI…KVGAKQLPKA (301 aa)) is catalytic. The Alpha-type protein kinase domain occupies 564-808 (EFDPIINKWI…VCALLDLDVK (245 aa)). An ATP-binding site is contributed by 778–783 (GLGNLG). WD repeat units follow at residues 867 to 897 (SFRE…RVFD), 910 to 938 (GHRK…KVHI), 952 to 980 (GHTG…KVWD), 993 to 1021 (VHTK…YVWD), 1033 to 1061 (GHED…KIWD), 1073 to 1101 (GHWN…KVWD), and 1114 to 1142 (SHSL…KVWE).

Belongs to the protein kinase superfamily. Alpha-type protein kinase family. ALPK subfamily. Oligomer. Requires Mg(2+) as cofactor. It depends on Mn(2+) as a cofactor. Post-translationally, the N-terminus is blocked.

It carries out the reaction L-threonyl-[myosin heavy-chain] + ATP = O-phospho-L-threonyl-[myosin heavy-chain] + ADP + H(+). Catalyzes its autophosphorylation, which is needed for enzymatic activity and phosphorylates myosin II heavy chain at a threonine in the C-terminal tail region. This phosphorylation is critical for regulating the assembly and disassembly of myosin II filament, affecting myosin localization during an array of cellular contractile events, including cytokinesis and capping of cell surface receptors as well as chemotactic cell locomotion. In Dictyostelium discoideum (Social amoeba), this protein is Myosin heavy chain kinase A (mhkA).